The chain runs to 587 residues: RuBisCO large subunit-binding protein subunit alpha, chloroplastic (587 aa).

Over residues 1 to 25 (MASTNALSSTSILRSPTNQAQTSLS) the composition is skewed to polar residues. The segment at 1 to 33 (MASTNALSSTSILRSPTNQAQTSLSKKVKQHGR) is disordered. The N-terminal 47 residues, 1–47 (MASTNALSSTSILRSPTNQAQTSLSKKVKQHGRVNFRQKPNRFVVKA), are a transit peptide targeting the chloroplast.

It belongs to the chaperonin (HSP60) family. As to quaternary structure, oligomer of probably six alpha and six beta subunits.

The protein resides in the plastid. The protein localises to the chloroplast. Functionally, this protein binds RuBisCO small and large subunits and is implicated in the assembly of the enzyme oligomer. This Pisum sativum (Garden pea) protein is RuBisCO large subunit-binding protein subunit alpha, chloroplastic.